The primary structure comprises 302 residues: UDP-N-acetylenolpyruvoylglucosamine reductase (302 aa).

An FAD-binding PCMH-type domain is found at Lys29–Asp192. Arg172 is a catalytic residue. The Proton donor role is filled by Ser221. Residue Glu291 is part of the active site.

This sequence belongs to the MurB family. Requires FAD as cofactor.

The protein resides in the cytoplasm. It catalyses the reaction UDP-N-acetyl-alpha-D-muramate + NADP(+) = UDP-N-acetyl-3-O-(1-carboxyvinyl)-alpha-D-glucosamine + NADPH + H(+). Its pathway is cell wall biogenesis; peptidoglycan biosynthesis. Its function is as follows. Cell wall formation. In Trichlorobacter lovleyi (strain ATCC BAA-1151 / DSM 17278 / SZ) (Geobacter lovleyi), this protein is UDP-N-acetylenolpyruvoylglucosamine reductase.